Consider the following 500-residue polypeptide: Protein DETOXIFICATION 29 (500 aa).

Helical transmembrane passes span 67 to 87, 91 to 111, 132 to 152, 161 to 181, 197 to 217, 227 to 247, 277 to 297, 302 to 322, 349 to 369, 393 to 413, 419 to 439, and 449 to 469; these read GAITQVFAGHISTIALAAVSV, VVAGFSFGIMLGMGSALETLC, VILNVTALILSLLYIFAAPIL, ISSAAGIFSIYMIPQIFAYAI, VMAVISAVALVIHVPLTWFVI, LAVVLNASWCFIDMAQLVYIF, AVMLCLEVWYFMAIILFAGYL, ISVAALSICMNILGWTAMIAI, LVAVITSTLIGFIVSMILLIF, ILALSIVINNVQPVLSGVAVG, VVAYVNIACYYVFGIPFGLLL, and GIWCGMLTGTVVQTIVLTWMI.

The protein belongs to the multi antimicrobial extrusion (MATE) (TC 2.A.66.1) family.

The protein resides in the vacuole membrane. The chain is Protein DETOXIFICATION 29 from Arabidopsis thaliana (Mouse-ear cress).